Consider the following 125-residue polypeptide: Small ribosomal subunit protein uS13 (125 aa).

Residues 91–125 (HRRSLPVRGQNTQTNARTRKGKRKTVAGKKKAARK) are disordered. The segment covering 107–125 (RTRKGKRKTVAGKKKAARK) has biased composition (basic residues).

It belongs to the universal ribosomal protein uS13 family. As to quaternary structure, part of the 30S ribosomal subunit. Forms a loose heterodimer with protein S19. Forms two bridges to the 50S subunit in the 70S ribosome.

Its function is as follows. Located at the top of the head of the 30S subunit, it contacts several helices of the 16S rRNA. In the 70S ribosome it contacts the 23S rRNA (bridge B1a) and protein L5 of the 50S subunit (bridge B1b), connecting the 2 subunits; these bridges are implicated in subunit movement. Contacts the tRNAs in the A and P-sites. The protein is Small ribosomal subunit protein uS13 of Chlorobium phaeovibrioides (strain DSM 265 / 1930) (Prosthecochloris vibrioformis (strain DSM 265)).